The sequence spans 164 residues: UPF0304 protein YfbU (164 aa).

The protein belongs to the UPF0304 family.

The sequence is that of UPF0304 protein YfbU from Escherichia coli O127:H6 (strain E2348/69 / EPEC).